A 451-amino-acid chain; its full sequence is Tubulin alpha chain (451 aa).

GTP is bound at residue Q11. N6-acetyllysine is present on K40. GTP is bound by residues E71, G144, T145, T179, N206, and N228. Mg(2+) is bound at residue E71. The active site involves E254.

The protein belongs to the tubulin family. As to quaternary structure, dimer of alpha and beta chains. A typical microtubule is a hollow water-filled tube with an outer diameter of 25 nm and an inner diameter of 15 nM. Alpha-beta heterodimers associate head-to-tail to form protofilaments running lengthwise along the microtubule wall with the beta-tubulin subunit facing the microtubule plus end conferring a structural polarity. Microtubules usually have 13 protofilaments but different protofilament numbers can be found in some organisms and specialized cells. It depends on Mg(2+) as a cofactor. Post-translationally, undergoes a tyrosination/detyrosination cycle, the cyclic removal and re-addition of a C-terminal tyrosine residue by the enzymes tubulin tyrosine carboxypeptidase (TTCP) and tubulin tyrosine ligase (TTL), respectively. Acetylation of alpha chains at Lys-40 stabilizes microtubules and affects affinity and processivity of microtubule motors. This modification has a role in multiple cellular functions, ranging from cell motility, cell cycle progression or cell differentiation to intracellular trafficking and signaling.

It is found in the cytoplasm. The protein resides in the cytoskeleton. It catalyses the reaction GTP + H2O = GDP + phosphate + H(+). Tubulin is the major constituent of microtubules, a cylinder consisting of laterally associated linear protofilaments composed of alpha- and beta-tubulin heterodimers. Microtubules grow by the addition of GTP-tubulin dimers to the microtubule end, where a stabilizing cap forms. Below the cap, tubulin dimers are in GDP-bound state, owing to GTPase activity of alpha-tubulin. The protein is Tubulin alpha chain (TUBA) of Triticum aestivum (Wheat).